A 208-amino-acid polypeptide reads, in one-letter code: Large ribosomal subunit protein uL4 (208 aa).

Residues 45-77 are disordered; sequence RQGTHKAKERAEIKGSTRKIKKQKGTGTARAGS.

It belongs to the universal ribosomal protein uL4 family. Part of the 50S ribosomal subunit.

In terms of biological role, one of the primary rRNA binding proteins, this protein initially binds near the 5'-end of the 23S rRNA. It is important during the early stages of 50S assembly. It makes multiple contacts with different domains of the 23S rRNA in the assembled 50S subunit and ribosome. Its function is as follows. Forms part of the polypeptide exit tunnel. The protein is Large ribosomal subunit protein uL4 of Christiangramia forsetii (strain DSM 17595 / CGMCC 1.15422 / KT0803) (Gramella forsetii).